We begin with the raw amino-acid sequence, 1395 residues long: DNA-directed RNA polymerase subunit beta' (1395 aa).

4 residues coordinate Zn(2+): cysteine 70, cysteine 72, cysteine 85, and cysteine 88. Positions 470, 472, and 474 each coordinate Mg(2+). 4 residues coordinate Zn(2+): cysteine 815, cysteine 889, cysteine 896, and cysteine 899.

It belongs to the RNA polymerase beta' chain family. The RNAP catalytic core consists of 2 alpha, 1 beta, 1 beta' and 1 omega subunit. When a sigma factor is associated with the core the holoenzyme is formed, which can initiate transcription. The cofactor is Mg(2+). Requires Zn(2+) as cofactor.

The enzyme catalyses RNA(n) + a ribonucleoside 5'-triphosphate = RNA(n+1) + diphosphate. In terms of biological role, DNA-dependent RNA polymerase catalyzes the transcription of DNA into RNA using the four ribonucleoside triphosphates as substrates. This Anaeromyxobacter sp. (strain Fw109-5) protein is DNA-directed RNA polymerase subunit beta'.